The chain runs to 863 residues: Linoleate 9S-lipoxygenase 1 (863 aa).

Positions 32–158 (RDFTASLLDN…KYHYNRIFFA (127 aa)) constitute a PLAT domain. The Lipoxygenase domain occupies 161 to 863 (SYLPSQMPEA…ARGIPNSISI (703 aa)). A disordered region spans residues 204 to 244 (NDLGEPDRDNPRPVLGGSQKHPYPRRGRTGRIPTKKDPNSE). 5 residues coordinate Fe cation: histidine 518, histidine 523, histidine 709, asparagine 713, and isoleucine 863.

It belongs to the lipoxygenase family. As to quaternary structure, monomer. The cofactor is Fe cation.

Its subcellular location is the cytoplasm. It catalyses the reaction (9Z,12Z)-octadecadienoate + O2 = (9S)-hydroperoxy-(10E,12Z)-octadecadienoate. It participates in lipid metabolism; oxylipin biosynthesis. Plant lipoxygenase may be involved in a number of diverse aspects of plant physiology including growth and development, pest resistance, and senescence or responses to wounding. This lipoxygenase introduces molecular oxygen exclusively into the C-9 position of linoleic and linolenic. This chain is Linoleate 9S-lipoxygenase 1, found in Oryza sativa subsp. japonica (Rice).